Consider the following 754-residue polypeptide: RNA-directed RNA polymerase catalytic subunit (754 aa).

2 short sequence motifs (nuclear localization signal) span residues 189–197 (VVRREKDKR) and 205–218 (KVPV…KHDE). The interval 251-258 (RPFSKIVE) is promoter-binding site. In terms of domain architecture, RdRp catalytic spans 288 to 484 (VTSLNARMNS…GINMSLEKSY (197 aa)).

Belongs to the influenza viruses polymerase PB1 family. In terms of assembly, influenza RNA polymerase is composed of three subunits: PB1, PB2 and PA. Interacts (via N-terminus) with PA (via C-terminus). Interacts (via C-terminus) with PB2 (via N-terminus); this interaction is essential for transcription initiation. In terms of processing, phosphorylated by host PRKCA.

The protein localises to the host nucleus. It is found in the host cytoplasm. It catalyses the reaction RNA(n) + a ribonucleoside 5'-triphosphate = RNA(n+1) + diphosphate. Functionally, RNA-dependent RNA polymerase which is responsible for replication and transcription of virus RNA segments. The transcription of viral mRNAs occurs by a unique mechanism called cap-snatching. 5' methylated caps of cellular mRNAs are cleaved after 10-13 nucleotides by PA. In turn, these short capped RNAs are used as primers by PB1 for transcription of viral mRNAs. During virus replication, PB1 initiates RNA synthesis and copy vRNA into complementary RNA (cRNA) which in turn serves as a template for the production of more vRNAs. In Influenza C virus (strain C/Johannesburg/1/1966), this protein is RNA-directed RNA polymerase catalytic subunit.